The sequence spans 548 residues: Aspergilol synthase AuAP450 (548 aa).

The chain crosses the membrane as a helical span at residues 38–58; that stretch reads PQLVITTLGALLLAAFYLLPS. Cys-489 contacts heme.

The protein belongs to the cytochrome P450 family. Requires heme as cofactor.

It is found in the membrane. Its pathway is secondary metabolite biosynthesis; terpenoid biosynthesis. Cytochrome P450 monooxygenase; part of the gene cluster that mediates the biosynthesis of aspergiltriene A, aspergildienes A-D and aspergilols A-D. The bifunctional terpene synthase AuAS converts DMAPP and IPP into sesterterpenes. The C-terminal prenyltransferase (PT) domain of AuAS catalyzes formation of GFPP, whereas the N-terminal terpene cyclase (TC) domain catalyzes the cyclization of GFPP into 5 distinct sesterterpenes: aspergiltriene A, aspergildiene A, aspergildiene B, aspergildiene C and aspergildiene D. The cytochrome P450 monooxygenase AP450 then hydroxylates the aspergildienes A, B, C and D to yield the corresponding sesterterpene alcohols, aspergilols A-D. The chain is Aspergilol synthase AuAP450 from Aspergillus ustus.